The sequence spans 328 residues: Sulfate adenylyltransferase subunit 2 (328 aa).

A disordered region spans residues R309–F328.

Belongs to the PAPS reductase family. CysD subfamily. Heterodimer composed of CysD, the smaller subunit, and CysN.

It catalyses the reaction sulfate + ATP + H(+) = adenosine 5'-phosphosulfate + diphosphate. It functions in the pathway sulfur metabolism; hydrogen sulfide biosynthesis; sulfite from sulfate: step 1/3. With CysN forms the ATP sulfurylase (ATPS) that catalyzes the adenylation of sulfate producing adenosine 5'-phosphosulfate (APS) and diphosphate, the first enzymatic step in sulfur assimilation pathway. APS synthesis involves the formation of a high-energy phosphoric-sulfuric acid anhydride bond driven by GTP hydrolysis by CysN coupled to ATP hydrolysis by CysD. The polypeptide is Sulfate adenylyltransferase subunit 2 (Hyphomonas neptunium (strain ATCC 15444)).